Reading from the N-terminus, the 415-residue chain is BTB/POZ and MATH domain-containing protein 6 (415 aa).

Positions 1–33 are disordered; sequence MSKLMTRTSGSSSPNTIPDQIESPTSSRSVTQT. Residues 35–169 enclose the MATH domain; that stretch reads NGSHQFVIQG…DDCLKINCTV (135 aa). The BTB domain occupies 205–271; it reads SDVTFDVAGE…MYKDSLPGDV (67 aa). Residues 385-415 form a disordered region; the sequence is SSSGGGKSQSVWAQLSNGGETSSRRVRQRTT. The span at 392–405 shows a compositional bias: polar residues; that stretch reads SQSVWAQLSNGGET.

Belongs to the Tdpoz family. Heterodimer with BPM1. Interacts with RAP2-4. Interacts with CUL3A. Binds to MYB56 at the promoter of FLOWERING LOCUS T (FT). Ubiquitous.

It is found in the nucleus. It localises to the cytoplasm. It participates in protein modification; protein ubiquitination. Functionally, may act as a substrate-specific adapter of an E3 ubiquitin-protein ligase complex (CUL3-RBX1-BTB) which mediates the ubiquitination and subsequent proteasomal degradation of target proteins. This Arabidopsis thaliana (Mouse-ear cress) protein is BTB/POZ and MATH domain-containing protein 6 (BPM6).